Here is an 892-residue protein sequence, read N- to C-terminus: MEITHDYKVKLFEEMNFERKQCSECKQWFWTLDKERITCGDSPCDKYSFIGNPITTKKYTYNEMVKEFTNFFDERGHSPVKRSPVIAKRWRDDILLTIASIAVFQPWVTNGLVKPVKNPLVITQPCIRLNDIDNVGRTGRHLTCFTMGAHHAFNSKDEYKYWTDKTVELCFELMQKLGIDGHTITFIESWWEGGGNAGPCYEVITHGVELATLVFMQYKKVGNNYEEIPLKIVDTGYGIERFAWASQGTPTVYEALFSDIIEKLKKNANIPIVDEKIMAESATLAGLMDIENVGDLKALRQKVAEKIGMDVNELDRLISPLEYIYAISDHTRCLSFMFGDGIVPSNVKEGYLARLVLRKTLRYMEKVGISYSIKEIILMQLESMKEVYPELIGMKDYIMDVLDSEEKKYIQTVNKGRGIVERMTKLKSEITLNDLINLYDSNGLPPEIVKDIIDEINKTSKTKISIHVPDNFYTIVAERHEEEKAEEVAILKHELPELDLPKTELLFFKNTMQSEFEAKVLKIVDKYIILDRTVFYAEGGGQKYDIGQISGVDVVDVQKKNGIVFHKVLDISKFKEGNLVKGELNFENRLKLMRNHTATHVINAALKQVLGKHVWQTGSNVDTEKGRLDVTHYERISRKEIKEIEKIANEIVLLGKPVTCKFMDRNDAEQEYGFKIYQGGVVPGDTLRIVEIDGIDVEACGGTHVTNTSEIGYIKVLKTERIQDGVERLEYSTGMGSIFEIAALEDILLDSAEVLGVPIENLPKTAKRFFEEWKEQKKVIEELQKKVGELLKYELLEKFEKVGNLEILVEKVSGTSNELMAIADNLATNGKIVILMNDTDYILCKKGENVEISMKELIQKIGKGGGKENLAQGKYSTSKEQIREKAFELLKQ.

Residues H596, H600, C700, and H704 each contribute to the Zn(2+) site.

It belongs to the class-II aminoacyl-tRNA synthetase family. Zn(2+) serves as cofactor.

Its subcellular location is the cytoplasm. It catalyses the reaction tRNA(Ala) + L-alanine + ATP = L-alanyl-tRNA(Ala) + AMP + diphosphate. Functionally, catalyzes the attachment of alanine to tRNA(Ala) in a two-step reaction: alanine is first activated by ATP to form Ala-AMP and then transferred to the acceptor end of tRNA(Ala). Also edits incorrectly charged Ser-tRNA(Ala) and Gly-tRNA(Ala) via its editing domain. The protein is Alanine--tRNA ligase of Methanococcus vannielii (strain ATCC 35089 / DSM 1224 / JCM 13029 / OCM 148 / SB).